Consider the following 96-residue polypeptide: 2Fe-2S ferredoxin-5 (96 aa).

The 95-residue stretch at 2 to 96 folds into the 2Fe-2S ferredoxin-type domain; that stretch reads PKVIVANINA…GKGDVVIYLP (95 aa). Residues C36, C42, C45, and C81 each contribute to the [2Fe-2S] cluster site.

The protein belongs to the adrenodoxin/putidaredoxin family. It depends on [2Fe-2S] cluster as a cofactor.

Its function is as follows. May be involved in the assembly of iron-sulfur clusters (Isc-Fd). The sequence is that of 2Fe-2S ferredoxin-5 (fdx5) from Aquifex aeolicus (strain VF5).